We begin with the raw amino-acid sequence, 1379 residues long: ABC multidrug transporter MDR2 (1379 aa).

Residues 65–85 (IALIVIGTIAGIGAGIPFPLL) form a helical membrane-spanning segment. An ABC transmembrane type-1 1 domain is found at 69-367 (VIGTIAGIGA…MAPFMHIFAS (299 aa)). An N-linked (GlcNAc...) asparagine glycan is attached at asparagine 97. 5 consecutive transmembrane segments (helical) span residues 119-139 (VLQV…HTGC), 193-213 (KVGL…VAFL), 215-235 (VATI…MAFG), 301-321 (IQFG…FWQG), and 336-356 (VSVG…FVLS). The ABC transporter 1 domain occupies 403-682 (IELQDVTFNY…DGVYAGMVRL (280 aa)). ATP is bound at residue 438-445 (GTSGSGKS). N-linked (GlcNAc...) asparagine glycosylation is found at asparagine 552 and asparagine 633. Positions 738–758 (YMPEEADSLPTEPENEKEKPK) are disordered. 4 helical membrane passes run 781 to 801 (LGLI…VIFG), 820 to 840 (GMLF…AVIV), 881 to 901 (LLVA…GTTI), and 920 to 942 (VIAW…SGVL). Residues 781–1068 (LGLITSIMIG…MFALVPDISK (288 aa)) enclose the ABC transmembrane type-1 2 domain. Residue asparagine 989 is glycosylated (N-linked (GlcNAc...) asparagine). The next 2 helical transmembrane spans lie at 1008–1028 (FWLS…YWWG) and 1032–1052 (ILAG…LLFS). The ABC transporter 2 domain maps to 1135 to 1374 (VQFRNVHFRY…CESYRANVIH (240 aa)). 1170–1177 (GPSGSGKS) is a binding site for ATP.

The protein belongs to the ABC transporter superfamily. ABCB family. Multidrug resistance exporter (TC 3.A.1.201) subfamily.

Its subcellular location is the cell membrane. Its function is as follows. Pleiotropic ABC efflux transporter that may be involved in the modulation susceptibility to a wide range of unrelated cytotoxic compounds. The polypeptide is ABC multidrug transporter MDR2 (Trichophyton interdigitale (strain MR816)).